The chain runs to 294 residues: DNA replication complex GINS protein SLD5 (294 aa).

It belongs to the GINS4/SLD5 family. As to quaternary structure, component of the GINS complex which is a heterotetramer composed of SLD5, PSF1, PSF2 and PSF3. Interacts with PSF2.

It localises to the nucleus. Functionally, required for DNA replication. Functions as part of the GINS complex which plays an essential role in the initiation of DNA replication by binding to DNA replication origins and facilitating the assembly of the DNA replication machinery. This chain is DNA replication complex GINS protein SLD5, found in Saccharomyces cerevisiae (strain ATCC 204508 / S288c) (Baker's yeast).